Consider the following 286-residue polypeptide: 33 kDa chaperonin (286 aa).

Intrachain disulfides connect C225–C227 and C258–C261.

The protein belongs to the HSP33 family. In terms of processing, under oxidizing conditions two disulfide bonds are formed involving the reactive cysteines. Under reducing conditions zinc is bound to the reactive cysteines and the protein is inactive.

It is found in the cytoplasm. Redox regulated molecular chaperone. Protects both thermally unfolding and oxidatively damaged proteins from irreversible aggregation. Plays an important role in the bacterial defense system toward oxidative stress. The sequence is that of 33 kDa chaperonin from Shewanella sp. (strain MR-4).